A 190-amino-acid chain; its full sequence is Probable nicotinate-nucleotide adenylyltransferase (190 aa).

It belongs to the NadD family.

It carries out the reaction nicotinate beta-D-ribonucleotide + ATP + H(+) = deamido-NAD(+) + diphosphate. It functions in the pathway cofactor biosynthesis; NAD(+) biosynthesis; deamido-NAD(+) from nicotinate D-ribonucleotide: step 1/1. Its function is as follows. Catalyzes the reversible adenylation of nicotinate mononucleotide (NaMN) to nicotinic acid adenine dinucleotide (NaAD). This chain is Probable nicotinate-nucleotide adenylyltransferase, found in Borrelia hermsii (strain HS1 / DAH).